Consider the following 454-residue polypeptide: UDP-N-acetylmuramoylalanine--D-glutamate ligase (454 aa).

115–121 lines the ATP pocket; the sequence is GTNGKTT.

Belongs to the MurCDEF family.

The protein resides in the cytoplasm. It catalyses the reaction UDP-N-acetyl-alpha-D-muramoyl-L-alanine + D-glutamate + ATP = UDP-N-acetyl-alpha-D-muramoyl-L-alanyl-D-glutamate + ADP + phosphate + H(+). Its pathway is cell wall biogenesis; peptidoglycan biosynthesis. Cell wall formation. Catalyzes the addition of glutamate to the nucleotide precursor UDP-N-acetylmuramoyl-L-alanine (UMA). This is UDP-N-acetylmuramoylalanine--D-glutamate ligase from Thermoanaerobacter pseudethanolicus (strain ATCC 33223 / 39E) (Clostridium thermohydrosulfuricum).